The primary structure comprises 186 residues: UPF0301 protein Tgr7_2910 (186 aa).

This sequence belongs to the UPF0301 (AlgH) family.

This Thioalkalivibrio sulfidiphilus (strain HL-EbGR7) protein is UPF0301 protein Tgr7_2910.